Consider the following 201-residue polypeptide: uncharacterized protein (201 aa).

This sequence belongs to the mimivirus L885/R898 family.

This is an uncharacterized protein from Acanthamoeba polyphaga (Amoeba).